The primary structure comprises 103 residues: uncharacterized protein (103 aa).

A signal peptide spans 1 to 13 (MLLSSIVSFVADA). N67 carries N-linked (GlcNAc...) asparagine glycosylation. The tract at residues 73–103 (LSSDSNRNIIDNSNNNQHPSSSSTSTSWKKF) is disordered.

It is found in the secreted. This is an uncharacterized protein from Dictyostelium discoideum (Social amoeba).